We begin with the raw amino-acid sequence, 59 residues long: Cecropin-A (59 aa).

The signal sequence occupies residues 1-23; it reads MNFNKLFVIVLLAALAFFGQAEA. At Leu57 the chain carries Leucine amide.

Belongs to the cecropin family.

The protein resides in the secreted. Its function is as follows. Cecropins have lytic and antibacterial activity against several Gram-positive and Gram-negative bacteria. The sequence is that of Cecropin-A (CECA) from Culex pipiens pipiens (Northern house mosquito).